Here is a 478-residue protein sequence, read N- to C-terminus: Argininosuccinate lyase (478 aa).

This sequence belongs to the lyase 1 family. Argininosuccinate lyase subfamily.

Its subcellular location is the cytoplasm. It catalyses the reaction 2-(N(omega)-L-arginino)succinate = fumarate + L-arginine. It functions in the pathway amino-acid biosynthesis; L-arginine biosynthesis; L-arginine from L-ornithine and carbamoyl phosphate: step 3/3. The sequence is that of Argininosuccinate lyase from Leptospira biflexa serovar Patoc (strain Patoc 1 / Ames).